A 960-amino-acid polypeptide reads, in one-letter code: Phosphoenolpyruvate carboxylase 3 (960 aa).

Ser8 is modified (phosphoserine). Active-site residues include His167 and Lys597.

It belongs to the PEPCase type 1 family. In terms of assembly, homotetramer. The cofactor is Mg(2+).

The protein resides in the cytoplasm. The enzyme catalyses oxaloacetate + phosphate = phosphoenolpyruvate + hydrogencarbonate. It functions in the pathway photosynthesis; C4 acid pathway. Its activity is regulated as follows. By light-reversible phosphorylation. Functionally, through the carboxylation of phosphoenolpyruvate (PEP) it forms oxaloacetate, a four-carbon dicarboxylic acid source for the tricarboxylic acid cycle. This is Phosphoenolpyruvate carboxylase 3 from Sorghum bicolor (Sorghum).